A 340-amino-acid chain; its full sequence is Biotin synthase (340 aa).

The Radical SAM core domain maps to 47–269 (SELQLSQLLS…VAVARIVCPK (223 aa)). 3 residues coordinate [4Fe-4S] cluster: cysteine 62, cysteine 66, and cysteine 69. The [2Fe-2S] cluster site is built by cysteine 106, cysteine 137, cysteine 197, and arginine 273.

Belongs to the radical SAM superfamily. Biotin synthase family. Homodimer. The cofactor is [4Fe-4S] cluster. Requires [2Fe-2S] cluster as cofactor.

The catalysed reaction is (4R,5S)-dethiobiotin + (sulfur carrier)-SH + 2 reduced [2Fe-2S]-[ferredoxin] + 2 S-adenosyl-L-methionine = (sulfur carrier)-H + biotin + 2 5'-deoxyadenosine + 2 L-methionine + 2 oxidized [2Fe-2S]-[ferredoxin]. It participates in cofactor biosynthesis; biotin biosynthesis; biotin from 7,8-diaminononanoate: step 2/2. Its function is as follows. Catalyzes the conversion of dethiobiotin (DTB) to biotin by the insertion of a sulfur atom into dethiobiotin via a radical-based mechanism. This chain is Biotin synthase, found in Caulobacter sp. (strain K31).